The primary structure comprises 211 residues: 3-demethoxyubiquinol 3-hydroxylase (211 aa).

The tract at residues 22–43 (KHPLNPNRKSPSANTVDGQLSD) is disordered. Polar residues predominate over residues 28–42 (NRKSPSANTVDGQLS). Positions 60, 90, 93, 142, 174, and 177 each coordinate Fe cation.

This sequence belongs to the COQ7 family. It depends on Fe cation as a cofactor.

Its subcellular location is the cell membrane. It catalyses the reaction a 5-methoxy-2-methyl-3-(all-trans-polyprenyl)benzene-1,4-diol + AH2 + O2 = a 3-demethylubiquinol + A + H2O. It participates in cofactor biosynthesis; ubiquinone biosynthesis. In terms of biological role, catalyzes the hydroxylation of 2-nonaprenyl-3-methyl-6-methoxy-1,4-benzoquinol during ubiquinone biosynthesis. This Francisella philomiragia subsp. philomiragia (strain ATCC 25017 / CCUG 19701 / FSC 153 / O#319-036) protein is 3-demethoxyubiquinol 3-hydroxylase.